The chain runs to 344 residues: Phosphate acyltransferase (344 aa).

Belongs to the PlsX family. Homodimer. Probably interacts with PlsY.

The protein resides in the cytoplasm. The enzyme catalyses a fatty acyl-[ACP] + phosphate = an acyl phosphate + holo-[ACP]. It participates in lipid metabolism; phospholipid metabolism. Catalyzes the reversible formation of acyl-phosphate (acyl-PO(4)) from acyl-[acyl-carrier-protein] (acyl-ACP). This enzyme utilizes acyl-ACP as fatty acyl donor, but not acyl-CoA. The sequence is that of Phosphate acyltransferase from Erwinia tasmaniensis (strain DSM 17950 / CFBP 7177 / CIP 109463 / NCPPB 4357 / Et1/99).